Reading from the N-terminus, the 371-residue chain is Glutamate 5-kinase (371 aa).

Lys-12 lines the ATP pocket. Residues Ser-52, Asp-136, and Asn-148 each contribute to the substrate site. ATP contacts are provided by residues 168 to 169 (SD) and 210 to 216 (TGGMRTK). The PUA domain maps to 275–354 (QGEILVDEGA…EDIAEKFGYS (80 aa)).

The protein belongs to the glutamate 5-kinase family.

Its subcellular location is the cytoplasm. The catalysed reaction is L-glutamate + ATP = L-glutamyl 5-phosphate + ADP. It functions in the pathway amino-acid biosynthesis; L-proline biosynthesis; L-glutamate 5-semialdehyde from L-glutamate: step 1/2. Catalyzes the transfer of a phosphate group to glutamate to form L-glutamate 5-phosphate. The polypeptide is Glutamate 5-kinase (Idiomarina loihiensis (strain ATCC BAA-735 / DSM 15497 / L2-TR)).